Consider the following 375-residue polypeptide: tRNA-specific 2-thiouridylase MnmA (375 aa).

Residues 9-16 and Leu-35 contribute to the ATP site; that span reads AMSGGVDS. The active-site Nucleophile is the Cys-105. A disulfide bond links Cys-105 and Cys-201. ATP is bound at residue Gly-129. Residues 151-153 form an interaction with tRNA region; the sequence is KNQ. Catalysis depends on Cys-201, which acts as the Cysteine persulfide intermediate. The interaction with tRNA stretch occupies residues 307-308; sequence RY.

This sequence belongs to the MnmA/TRMU family.

Its subcellular location is the cytoplasm. It catalyses the reaction S-sulfanyl-L-cysteinyl-[protein] + uridine(34) in tRNA + AH2 + ATP = 2-thiouridine(34) in tRNA + L-cysteinyl-[protein] + A + AMP + diphosphate + H(+). Its function is as follows. Catalyzes the 2-thiolation of uridine at the wobble position (U34) of tRNA, leading to the formation of s(2)U34. The chain is tRNA-specific 2-thiouridylase MnmA from Leptospira interrogans serogroup Icterohaemorrhagiae serovar copenhageni (strain Fiocruz L1-130).